The sequence spans 456 residues: G-protein coupled receptor 39 (456 aa).

Residues 1-34 (MASSSGSNHICSRVIDHSHVPEFEVATWIKITLI) lie on the Extracellular side of the membrane. 2 disulfide bridges follow: Cys11–Cys191 and Cys108–Cys210. His17 and His19 together coordinate Zn(2+). Residues 35-55 (LVYLIIFVVGILGNSVTIRVT) form a helical membrane-spanning segment. The Cytoplasmic portion of the chain corresponds to 56 to 69 (QVLQKKGYLQKEVT). The chain crosses the membrane as a helical span at residues 70 to 89 (DHMVSLACSDILVFLIGMPM). Over 90–109 (EFYSIIWNPLTTPSYALSCK) the chain is Extracellular. Residues 110 to 131 (LHTFLFETCSYATLLHVLTLSF) traverse the membrane as a helical segment. Topologically, residues 132–151 (ERYIAICHPFKYKAVSGPRQ) are cytoplasmic. A helical transmembrane segment spans residues 152-172 (VKLLIGFVWVTSALVALPLLF). At 173–217 (AMGIEYPLVNVPTHKGLNCNLSRTRHHDEPGNSNMSICTNLSNRW) the chain is on the extracellular side. Residues Asn192 and Asn206 are each glycosylated (N-linked (GlcNAc...) asparagine). The helical transmembrane segment at 218–242 (EVFQSSIFGAFAVYLVVLASVAFMC) threads the bilayer. At 243-283 (WNMMKVLMKSKQGTLAGTGPQLQLRKSESEESRTARRQTII) the chain is on the cytoplasmic side. Residues 284–305 (FLRLIVVTLAVCWMPNQIRRIM) form a helical membrane-spanning segment. Topologically, residues 306–323 (AAAKPKHDWTRTYFRAYM) are extracellular. The chain crosses the membrane as a helical span at residues 324–344 (ILLPFSDTFFYLSSVVNPLLY). Residues 345 to 456 (NVSSQQFRKV…TENSLQEQEV (112 aa)) lie on the Cytoplasmic side of the membrane. Ser397 carries the phosphoserine modification. The tract at residues 415-456 (FQTEAKPGEAKPQPLSPESPQTGSETKPAGSTTENSLQEQEV) is disordered. Residues 430 to 456 (SPESPQTGSETKPAGSTTENSLQEQEV) are compositionally biased toward polar residues.

This sequence belongs to the G-protein coupled receptor 1 family. In terms of assembly, interacts with HTR1A. Interacts with GALR1. As to expression, expression is detected in septumamygdala, parietal cells, enterocytes, neurons and pancreas, in peripheral organs such as the duodenum and kidney but not in the pituitary and hypothalamus.

Its subcellular location is the cell membrane. In terms of biological role, zinc-sensing receptor that can sense changes in extracellular Zn(2+), mediate Zn(2+) signal transmission, and participates in the regulation of numerous physiological processes including glucose homeostasis regulation, gastrointestinal mobility, hormone secretion and cell death. Activation by Zn(2+) in keratinocytes increases the intracellular concentration of Ca(2+) and activates the ERK/MAPK and PI3K/AKT signaling pathways leading to epithelial repair. Plays an essential role in normal wound healing by inducing the production of cytokines including the major inflammatory cytokine IL6 via the PKC/MAPK/CEBPB pathway. Regulates adipose tissue metabolism, especially lipolysis, and regulates the function of lipases, such as hormone-sensitive lipase and adipose triglyceride lipase. Plays a role in the inhibition of cell death and protects against oxidative, endoplasmic reticulum and mitochondrial stress by inducing secretion of the cytoprotective pigment epithelium-derived growth factor (PEDF) and probably other protective transcripts in a GNA13/RHOA/SRE-dependent manner. Forms dynamic heteroreceptor complexes with HTR1A and GALR1 depending on cell type or specific physiological states, resulting in signaling diversity: HTR1A-GPR39 shows additive increase in signaling along the serum response element (SRE) and NF-kappa-B pathways while GALR1 acts as an antagonist blocking SRE. This chain is G-protein coupled receptor 39 (Gpr39), found in Mus musculus (Mouse).